A 317-amino-acid polypeptide reads, in one-letter code: Aspartate carbamoyltransferase catalytic subunit (317 aa).

Carbamoyl phosphate contacts are provided by R55 and T56. K83 contacts L-aspartate. 3 residues coordinate carbamoyl phosphate: R105, H138, and Q141. Residues R171 and R225 each contribute to the L-aspartate site. 2 residues coordinate carbamoyl phosphate: G266 and P267.

It belongs to the aspartate/ornithine carbamoyltransferase superfamily. ATCase family. In terms of assembly, heterododecamer (2C3:3R2) of six catalytic PyrB chains organized as two trimers (C3), and six regulatory PyrI chains organized as three dimers (R2).

It catalyses the reaction carbamoyl phosphate + L-aspartate = N-carbamoyl-L-aspartate + phosphate + H(+). Its pathway is pyrimidine metabolism; UMP biosynthesis via de novo pathway; (S)-dihydroorotate from bicarbonate: step 2/3. Catalyzes the condensation of carbamoyl phosphate and aspartate to form carbamoyl aspartate and inorganic phosphate, the committed step in the de novo pyrimidine nucleotide biosynthesis pathway. In Mycobacteroides abscessus (strain ATCC 19977 / DSM 44196 / CCUG 20993 / CIP 104536 / JCM 13569 / NCTC 13031 / TMC 1543 / L948) (Mycobacterium abscessus), this protein is Aspartate carbamoyltransferase catalytic subunit.